A 69-amino-acid polypeptide reads, in one-letter code: Large ribosomal subunit protein bL31 (69 aa).

4 residues coordinate Zn(2+): C17, C19, C37, and C40.

It belongs to the bacterial ribosomal protein bL31 family. Type A subfamily. Part of the 50S ribosomal subunit. Zn(2+) is required as a cofactor.

Functionally, binds the 23S rRNA. This chain is Large ribosomal subunit protein bL31, found in Thermoanaerobacter pseudethanolicus (strain ATCC 33223 / 39E) (Clostridium thermohydrosulfuricum).